The chain runs to 1898 residues: Receptor-type tyrosine-protein phosphatase F (1898 aa).

A signal peptide spans 1–29 (MTPEPAPGRTMVPLVPALVMLGLVAGAHG). Residues 30-1254 (DSKPVFVKVP…QQQEEPELLW (1225 aa)) lie on the Extracellular side of the membrane. Ig-like C2-type domains follow at residues 33–123 (PVFV…AKLS), 135–224 (PSID…ANLY), and 232–314 (PRFS…AQVT). An intrachain disulfide couples Cys-54 to Cys-107. Heparin is bound at residue 68 to 77 (KKGKKVSSQR). Asn-117 carries N-linked (GlcNAc...) asparagine glycosylation. Cys-156 and Cys-207 form a disulfide bridge. N-linked (GlcNAc...) asparagine glycosylation is found at Asn-250 and Asn-295. Cysteines 253 and 298 form a disulfide. Fibronectin type-III domains follow at residues 321-411 (PPID…TGEQ), 416-510 (PPRR…TQQG), 514-604 (QPAD…TAQS), 609-706 (PPQK…TDED), 711-810 (PPRK…TTGA), 811-905 (VPGR…PEDV), 909-1001 (FPQN…TMPV), and 1005-1089 (FAKN…TAPD). Residues 399–418 (PPSEAVRARTGEQAPSSPPR) form a disordered region. A disordered region spans residues 693 to 713 (GPESSPVLVRTDEDVPSGPPR). The N-linked (GlcNAc...) asparagine glycan is linked to Asn-721. N-linked (GlcNAc...) asparagine glycans are attached at residues Asn-941 and Asn-957. The chain crosses the membrane as a helical span at residues 1255–1275 (VTGPVLAVILIVLIVIAILLF). The Cytoplasmic segment spans residues 1276–1898 (KRKRTHSPSS…YLGSFDHYAT (623 aa)). Ser-1296 bears the Phosphoserine mark. 2 consecutive Tyrosine-protein phosphatase domains span residues 1343 to 1598 (FSQE…LLEA) and 1630 to 1889 (MELE…ALEY). Residues Asp-1507, 1539-1545 (CSAGVGR), and Gln-1583 contribute to the substrate site. The active-site Phosphocysteine intermediate is the Cys-1539. Residue Cys-1830 is the Phosphocysteine intermediate of the active site.

Belongs to the protein-tyrosine phosphatase family. Receptor class 2A subfamily. As to quaternary structure, interacts with GRIP1. Interacts with PPFIA1, PPFIA2 and PPFIA3. Interacts with INSR.

It is found in the membrane. The enzyme catalyses O-phospho-L-tyrosyl-[protein] + H2O = L-tyrosyl-[protein] + phosphate. Functionally, possible cell adhesion receptor. It possesses an intrinsic protein tyrosine phosphatase activity (PTPase) and dephosphorylates EPHA2 regulating its activity. The first PTPase domain has enzymatic activity, while the second one seems to affect the substrate specificity of the first one. The protein is Receptor-type tyrosine-protein phosphatase F (PTPRF) of Bos taurus (Bovine).